The following is a 224-amino-acid chain: Ornithine decarboxylase antizyme (224 aa).

Belongs to the ODC antizyme family. In terms of assembly, interacts with ODC and thereby sterically blocks ODC homodimerization.

Its function is as follows. Ornithine decarboxylase (ODC) antizyme protein that negatively regulates ODC activity and intracellular polyamine biosynthesis in response to increased intracellular polyamine levels. Binds to ODC monomers, inhibiting the assembly of the functional ODC homodimer, and targets the monomers for ubiquitin-independent proteolytic destruction by the 26S proteasome. The chain is Ornithine decarboxylase antizyme (spa1) from Schizosaccharomyces octosporus (Fission yeast).